The primary structure comprises 406 residues: Probable tRNA sulfurtransferase (406 aa).

A THUMP domain is found at 60 to 162 (PEAKARLQDT…PGAALLEVER (103 aa)). ATP-binding positions include 180–181 (LL), 205–206 (HF), Arg262, Gly284, and Gln293.

It belongs to the ThiI family.

It localises to the cytoplasm. The catalysed reaction is [ThiI sulfur-carrier protein]-S-sulfanyl-L-cysteine + a uridine in tRNA + 2 reduced [2Fe-2S]-[ferredoxin] + ATP + H(+) = [ThiI sulfur-carrier protein]-L-cysteine + a 4-thiouridine in tRNA + 2 oxidized [2Fe-2S]-[ferredoxin] + AMP + diphosphate. It catalyses the reaction [ThiS sulfur-carrier protein]-C-terminal Gly-Gly-AMP + S-sulfanyl-L-cysteinyl-[cysteine desulfurase] + AH2 = [ThiS sulfur-carrier protein]-C-terminal-Gly-aminoethanethioate + L-cysteinyl-[cysteine desulfurase] + A + AMP + 2 H(+). It participates in cofactor biosynthesis; thiamine diphosphate biosynthesis. Catalyzes the ATP-dependent transfer of a sulfur to tRNA to produce 4-thiouridine in position 8 of tRNAs, which functions as a near-UV photosensor. Also catalyzes the transfer of sulfur to the sulfur carrier protein ThiS, forming ThiS-thiocarboxylate. This is a step in the synthesis of thiazole, in the thiamine biosynthesis pathway. The sulfur is donated as persulfide by IscS. The sequence is that of Probable tRNA sulfurtransferase from Thermus thermophilus (strain ATCC 27634 / DSM 579 / HB8).